The sequence spans 158 residues: Protein shisa-like-2B (158 aa).

Residues 65 to 85 (IGALVGLGIAALVLLAFVISV) traverse the membrane as a helical segment.

It belongs to the shisa family.

The protein localises to the membrane. The sequence is that of Protein shisa-like-2B (Shisal2b) from Mus musculus (Mouse).